The following is a 439-amino-acid chain: Structure-specific endonuclease subunit SLX1 homolog (439 aa).

Disordered stretches follow at residues 1–28 (METFILSSDSDDDCPPPPKRRSIEGVPK) and 117–140 (DDDDDDEKESSTEHADDDLNLRAL). A compositionally biased stretch (basic and acidic residues) spans 125–136 (ESSTEHADDDLN). The 88-residue stretch at 166–253 (EFYGVYCLIS…PAVSKSLKEK (88 aa)) folds into the GIY-YIG domain. The SLX1-type zinc-finger motif lies at 335–390 (CRLCGKDIEKLWGLVRCISQSCHSHFHSKCLAEHGLKNKNEYADQIYPLKSNCPIC).

This sequence belongs to the SLX1 family. In terms of assembly, forms a heterodimer with him-18/slx-4. It depends on a divalent metal cation as a cofactor.

It localises to the nucleus. Its function is as follows. Catalytic subunit of a heterodimeric structure-specific endonuclease that resolves DNA secondary structures generated during DNA repair and recombination. Has endonuclease activity towards branched DNA substrates, introducing single-strand cuts in duplex DNA close to junctions with ss-DNA (Potential). Has a preference for replication forks over 5' flap structures or Holliday junctions and shows much lower activity toward 3' flap structures. Required for proper crossover distribution through inhibition of crossover formation at the central region of chromosomes. In Caenorhabditis briggsae, this protein is Structure-specific endonuclease subunit SLX1 homolog.